A 510-amino-acid chain; its full sequence is 2,3-bisphosphoglycerate-independent phosphoglycerate mutase (510 aa).

2 residues coordinate Mn(2+): D13 and S63. The Phosphoserine intermediate role is filled by S63. Residues H124, 154–155 (RD), R186, R192, 262–265 (RADR), and K334 each bind substrate. Mn(2+) is bound by residues D401, H405, D442, H443, and H461.

The protein belongs to the BPG-independent phosphoglycerate mutase family. In terms of assembly, monomer. It depends on Mn(2+) as a cofactor.

It catalyses the reaction (2R)-2-phosphoglycerate = (2R)-3-phosphoglycerate. The protein operates within carbohydrate degradation; glycolysis; pyruvate from D-glyceraldehyde 3-phosphate: step 3/5. In terms of biological role, catalyzes the interconversion of 2-phosphoglycerate and 3-phosphoglycerate. The protein is 2,3-bisphosphoglycerate-independent phosphoglycerate mutase of Vibrio vulnificus (strain YJ016).